A 519-amino-acid chain; its full sequence is AarF domain-containing protein kinase 1 (519 aa).

Residues 145–481 (SFEDTPLGAA…SLYRRVHISL (337 aa)) enclose the Protein kinase domain. Residues 151–159 (LGAASLAQV) and Lys173 each bind ATP. Asp305 (proton acceptor) is an active-site residue.

Belongs to the protein kinase superfamily. ADCK protein kinase family.

The protein resides in the mitochondrion. Functionally, appears to be essential for maintaining mitochondrial cristae formation and mitochondrial function by acting via YME1L1 in a kinase-independent manner to regulate essential mitochondrial structural proteins OPA1 and IMMT. The action of this enzyme is not yet clear. It is not known if it has protein kinase activity and what type of substrate it would phosphorylate (Ser, Thr or Tyr). This Gallus gallus (Chicken) protein is AarF domain-containing protein kinase 1 (ADCK1).